The following is a 365-amino-acid chain: Class I histocompatibility antigen, Gogo-A*0401 alpha chain (365 aa).

An N-terminal signal peptide occupies residues 1-24 (MAVMAPRTLVLLLSGALALTQTWA). The alpha-1 stretch occupies residues 25–114 (GSHSMRYFYT…LRGYYNQSED (90 aa)). Topologically, residues 25–308 (GSHSMRYFYT…EPSSQPTIPI (284 aa)) are extracellular. A glycan (N-linked (GlcNAc...) asparagine) is linked at Asn110. An alpha-2 region spans residues 115 to 206 (GSHTIQRMYG…ENGKETLQLT (92 aa)). Intrachain disulfides connect Cys125/Cys188 and Cys227/Cys283. The interval 207-298 (DAPKTHMTHH…GLPKPLTLRW (92 aa)) is alpha-3. Positions 209 to 295 (PKTHMTHHPV…QHEGLPKPLT (87 aa)) constitute an Ig-like C1-type domain. The connecting peptide stretch occupies residues 299–308 (EPSSQPTIPI). A helical transmembrane segment spans residues 309 to 332 (VGIIAGLVLFGAVIAGAVVAAVRW). At 333-365 (RRKSSDRKGGSYSQAASSDSAQGSDVSLTACKV) the chain is on the cytoplasmic side. A disordered region spans residues 338-365 (DRKGGSYSQAASSDSAQGSDVSLTACKV). Positions 342–359 (GSYSQAASSDSAQGSDVS) are enriched in low complexity. Ser343 is subject to Phosphoserine. The residue at position 344 (Tyr344) is a Phosphotyrosine. Phosphoserine is present on residues Ser345, Ser349, Ser350, Ser352, Ser356, and Ser359.

It belongs to the MHC class I family. Heterodimer of an alpha chain and a beta chain (beta-2-microglobulin).

The protein localises to the membrane. In terms of biological role, involved in the presentation of foreign antigens to the immune system. This chain is Class I histocompatibility antigen, Gogo-A*0401 alpha chain, found in Gorilla gorilla gorilla (Western lowland gorilla).